The chain runs to 342 residues: tRNA-specific 2-thiouridylase MnmA (342 aa).

Residues 6-13 and Leu32 each bind ATP; that span reads LLSGGVDS. Residue Cys92 is the Nucleophile of the active site. A disulfide bridge links Cys92 with Cys191. Gly116 is a binding site for ATP. The interaction with tRNA stretch occupies residues 138 to 140; that stretch reads KDQ. Catalysis depends on Cys191, which acts as the Cysteine persulfide intermediate. The interaction with tRNA stretch occupies residues 293–294; sequence RY.

It belongs to the MnmA/TRMU family.

The protein localises to the cytoplasm. It carries out the reaction S-sulfanyl-L-cysteinyl-[protein] + uridine(34) in tRNA + AH2 + ATP = 2-thiouridine(34) in tRNA + L-cysteinyl-[protein] + A + AMP + diphosphate + H(+). Its function is as follows. Catalyzes the 2-thiolation of uridine at the wobble position (U34) of tRNA, leading to the formation of s(2)U34. This is tRNA-specific 2-thiouridylase MnmA from Helicobacter pylori (strain HPAG1).